A 506-amino-acid chain; its full sequence is Glutamate--tRNA ligase (506 aa).

Residues 14–24 (PSPTGYLHIGG) carry the 'HIGH' region motif. The short motif at 261-265 (KLSKR) is the 'KMSKS' region element. Lysine 264 lines the ATP pocket.

Belongs to the class-I aminoacyl-tRNA synthetase family. Glutamate--tRNA ligase type 1 subfamily. As to quaternary structure, monomer.

It is found in the cytoplasm. It catalyses the reaction tRNA(Glu) + L-glutamate + ATP = L-glutamyl-tRNA(Glu) + AMP + diphosphate. Functionally, catalyzes the attachment of glutamate to tRNA(Glu) in a two-step reaction: glutamate is first activated by ATP to form Glu-AMP and then transferred to the acceptor end of tRNA(Glu). This is Glutamate--tRNA ligase from Roseiflexus sp. (strain RS-1).